The following is a 182-amino-acid chain: MSEEVGAKRWYAVHTYSGYENKVKKNLEKRVESMNMTEQIFRVVIPEEEETQVKDGKAKKLTKKTFPGYVLVELVMTDESWYVVRNTPGVTGFVGSAGAGSKPNPLLPDEVRFILKQMGMKEKTIDVEVEVGEQVRIKSGPFANQVGEVQEIEADKFKLTVLVDMFGRETPVEVEFDQIEKL.

The KOW domain maps to 131–163 (VGEQVRIKSGPFANQVGEVQEIEADKFKLTVLV).

This sequence belongs to the NusG family.

Participates in transcription elongation, termination and antitermination. This Staphylococcus carnosus (strain TM300) protein is Transcription termination/antitermination protein NusG.